The following is a 187-amino-acid chain: dTTP/UTP pyrophosphatase (187 aa).

Asp64 (proton acceptor) is an active-site residue.

Belongs to the Maf family. YhdE subfamily. A divalent metal cation is required as a cofactor.

It localises to the cytoplasm. The catalysed reaction is dTTP + H2O = dTMP + diphosphate + H(+). It carries out the reaction UTP + H2O = UMP + diphosphate + H(+). Its function is as follows. Nucleoside triphosphate pyrophosphatase that hydrolyzes dTTP and UTP. May have a dual role in cell division arrest and in preventing the incorporation of modified nucleotides into cellular nucleic acids. This Leptospira interrogans serogroup Icterohaemorrhagiae serovar Lai (strain 56601) protein is dTTP/UTP pyrophosphatase.